An 84-amino-acid chain; its full sequence is Small ribosomal subunit protein uS17 (84 aa).

Belongs to the universal ribosomal protein uS17 family. In terms of assembly, part of the 30S ribosomal subunit.

Its function is as follows. One of the primary rRNA binding proteins, it binds specifically to the 5'-end of 16S ribosomal RNA. The protein is Small ribosomal subunit protein uS17 of Borreliella burgdorferi (strain ATCC 35210 / DSM 4680 / CIP 102532 / B31) (Borrelia burgdorferi).